The chain runs to 223 residues: Phosphoribosylformylglycinamidine synthase subunit PurQ (223 aa).

The Glutamine amidotransferase type-1 domain occupies 3–223; sequence FAVLVFPGSN…MVKSWREQHV (221 aa). Cysteine 85 serves as the catalytic Nucleophile. Catalysis depends on residues histidine 193 and glutamate 195.

In terms of assembly, part of the FGAM synthase complex composed of 1 PurL, 1 PurQ and 2 PurS subunits.

The protein resides in the cytoplasm. The catalysed reaction is N(2)-formyl-N(1)-(5-phospho-beta-D-ribosyl)glycinamide + L-glutamine + ATP + H2O = 2-formamido-N(1)-(5-O-phospho-beta-D-ribosyl)acetamidine + L-glutamate + ADP + phosphate + H(+). It catalyses the reaction L-glutamine + H2O = L-glutamate + NH4(+). Its pathway is purine metabolism; IMP biosynthesis via de novo pathway; 5-amino-1-(5-phospho-D-ribosyl)imidazole from N(2)-formyl-N(1)-(5-phospho-D-ribosyl)glycinamide: step 1/2. Functionally, part of the phosphoribosylformylglycinamidine synthase complex involved in the purines biosynthetic pathway. Catalyzes the ATP-dependent conversion of formylglycinamide ribonucleotide (FGAR) and glutamine to yield formylglycinamidine ribonucleotide (FGAM) and glutamate. The FGAM synthase complex is composed of three subunits. PurQ produces an ammonia molecule by converting glutamine to glutamate. PurL transfers the ammonia molecule to FGAR to form FGAM in an ATP-dependent manner. PurS interacts with PurQ and PurL and is thought to assist in the transfer of the ammonia molecule from PurQ to PurL. The sequence is that of Phosphoribosylformylglycinamidine synthase subunit PurQ from Staphylococcus aureus (strain MRSA252).